A 1470-amino-acid chain; its full sequence is Guanine nucleotide exchange factor subunit R06F6.8 (1470 aa).

3 WD repeats span residues 20–58 (STAA…LLCS), 68–107 (ETRG…DEQC), and 472–512 (AYCS…VVGV). Disordered regions lie at residues 673–710 (QSQN…PMNQ), 975–1001 (FFRT…ADSS), 1017–1045 (RLNK…SKDK), and 1238–1259 (RSPS…SPSS). The span at 689-707 (SNVSIQSVSTSTTSEPSSP) shows a compositional bias: low complexity. A compositionally biased stretch (polar residues) spans 983–1001 (AKTSLSRRPTVSSPSADSS). Residues 1028 to 1045 (EQKDAPRKDSIGGSSKDK) show a composition bias toward basic and acidic residues. The chain crosses the membrane as a helical span at residues 1294 to 1314 (LLLSLFSQTATIDWIFLFCLL). The segment covering 1385–1403 (SPDNENRKASQKTSADDPK) has biased composition (basic and acidic residues). The interval 1385–1447 (SPDNENRKAS…SADRAHKSVK (63 aa)) is disordered. The span at 1411-1424 (SGSSKLNNSFSNPK) shows a compositional bias: polar residues. Over residues 1431–1447 (GRRERSRSADRAHKSVK) the composition is skewed to basic and acidic residues.

This sequence belongs to the RIC1 family. Component of a guanine nucleotide exchange factor (GEF) complex.

The protein localises to the membrane. Functionally, probable component of a guanine nucleotide exchange factor (GEF) that may be required for efficient fusion of endosome-derived vesicles with the Golgi. The chain is Guanine nucleotide exchange factor subunit R06F6.8 from Caenorhabditis elegans.